Here is a 152-residue protein sequence, read N- to C-terminus: Small ribosomal subunit protein uS15 (152 aa).

The span at 1 to 11 (MAKMHTKRKGK) shows a compositional bias: basic residues. The interval 1 to 23 (MAKMHTKRKGKSSSTRPIRTDPP) is disordered.

It belongs to the universal ribosomal protein uS15 family. In terms of assembly, part of the 30S ribosomal subunit.

The polypeptide is Small ribosomal subunit protein uS15 (Methanosarcina acetivorans (strain ATCC 35395 / DSM 2834 / JCM 12185 / C2A)).